The sequence spans 241 residues: Urease accessory protein UreF (241 aa).

It belongs to the UreF family. UreD, UreF and UreG form a complex that acts as a GTP-hydrolysis-dependent molecular chaperone, activating the urease apoprotein by helping to assemble the nickel containing metallocenter of UreC. The UreE protein probably delivers the nickel.

It is found in the cytoplasm. In terms of biological role, required for maturation of urease via the functional incorporation of the urease nickel metallocenter. The chain is Urease accessory protein UreF from Rhodopseudomonas palustris (strain BisB18).